A 345-amino-acid chain; its full sequence is Low-density lipoprotein receptor class A domain-containing protein 3 (345 aa).

The signal sequence occupies residues 1 to 17 (MWLLGPLCLLLSSAAES). Over 18-173 (QLLPGNNFTN…NQLVYYPSIT (156 aa)) the chain is Extracellular. A glycan (N-linked (GlcNAc...) asparagine) is linked at asparagine 24. LDL-receptor class A domains follow at residues 28–65 (ECNIPGNFMCSNGRCIPGAWQCDGLPDCFDKSDEKECP), 70–107 (KCGPTFFPCASGIHCIIGRFRCNGFEDCPDGSDEENCT), and 112–148 (LCSTARYHCKNGLCIDKSFICDGQNNCQDNSDEESCE). Disulfide bonds link cysteine 29–cysteine 42, cysteine 37–cysteine 55, cysteine 49–cysteine 64, cysteine 71–cysteine 84, cysteine 78–cysteine 97, cysteine 91–cysteine 106, cysteine 113–cysteine 125, cysteine 120–cysteine 138, and cysteine 132–cysteine 147. The segment at 30-57 (NIPGNFMCSNGRCIPGAWQCDGLPDCFD) is (Microbial infection) Interaction with Venezuelan equine encephalitis virus/VEEV spike proteins E1 and E2. A helical transmembrane segment spans residues 174-194 (YAIIGSSVIFVLVVALLALVL). Topologically, residues 195–345 (HHQRKRNNLM…SEPSQGTEEV (151 aa)) are cytoplasmic. Short sequence motifs (involved in ITCH interaction) lie at residues 256 to 259 (PPSY) and 275 to 278 (PPPY). A disordered region spans residues 270–345 (WYDLPPPPYS…SEPSQGTEEV (76 aa)). Positions 295-313 (SRSGSANSASSQAASSLLS) are enriched in low complexity.

This sequence belongs to the LDLR family. Interacts with APP precursor C-terminus. Interacts directly with ITCH; this interaction promotes ITCH auto-ubiquitination leading to its degradation. Interacts directly with NEDD4; this interaction promotes NEDD4 auto-ubiquitination. Interacts directly with NEDD4L. In terms of assembly, (Microbial infection) Interacts (via domain LDL-receptor class A 1) with Venezuelan equine encephalitis virus/VEEV spike proteins E1 and E2. Expressed at high levels in brain, lung, skeletal muscle, and pancreas. Expressed at moderate levels in heart, placenta, and kidney but not detected in the liver.

Its subcellular location is the cell membrane. Functionally, may influence APP processing, resulting in a decrease in sAPP-alpha production and increased amyloidogenic P3 peptide production. May regulate ITCH and NEDD4 E3 ligase activity and degradation. (Microbial infection) Acts as a receptor for Venezuelan equine encephalitis virus. The sequence is that of Low-density lipoprotein receptor class A domain-containing protein 3 from Homo sapiens (Human).